Here is a 327-residue protein sequence, read N- to C-terminus: E3 ubiquitin ligase Rnf121 (327 aa).

N-acetylalanine is present on alanine 2. A run of 5 helical transmembrane segments spans residues 50 to 70 (MHAEMVLILIATLVVAQLLLV), 79 to 99 (SYNMVTLFQMWVVPLYFTVKL), 100 to 120 (HWWRFLVIWIFFSAVTAFVTF), 148 to 168 (ATGIVGYMAVMFTLFGLNLLF), and 172 to 192 (PEDAMDFGISLLFYGLYYGVL). An RING-type; atypical zinc finger spans residues 226–276 (CAVCGQQIFVDVNEEGIIENTYRLSCNHVFHEFCIRGWCIVGKKQTCPYCK). The chain crosses the membrane as a helical span at residues 306–326 (LVAWQPVIIGLVQGISYILGL).

This sequence belongs to the RNF121 family.

It localises to the endoplasmic reticulum membrane. The enzyme catalyses S-ubiquitinyl-[E2 ubiquitin-conjugating enzyme]-L-cysteine + [acceptor protein]-L-lysine = [E2 ubiquitin-conjugating enzyme]-L-cysteine + N(6)-ubiquitinyl-[acceptor protein]-L-lysine.. Its pathway is protein modification; protein ubiquitination. Functionally, E3 ubiquitin ligase which accepts ubiquitin and transfers it to substrates thereby promoting their degradation by the endoplasmic reticulum-associated degradation (ERAD) pathway which is a pathway involved in ubiquitin-dependent degradation of misfolded endoplasmic reticulum proteins. May regulate the unfolded protein response to reduce endoplasmic reticulum stress. The sequence is that of E3 ubiquitin ligase Rnf121 (Rnf121) from Mus musculus (Mouse).